A 335-amino-acid polypeptide reads, in one-letter code: NmrA-like family domain-containing oxidoreductase ptmS (335 aa).

NADP(+)-binding positions include 12 to 17 (GATGNQ), 39 to 43 (RDPNS), 60 to 61 (DG), 81 to 88 (INSDDPVF), Lys-139, and 163 to 166 (FLEN). The interval 161 to 206 (GYFLENFLFKQGAFIMGGFPWETDAEGYLTWKVPYWGGEEQIPFLS) is interaction with ASS1.

It belongs to the NmrA-type oxidoreductase family.

It participates in secondary metabolite biosynthesis. In terms of biological role, nmrA-like family domain-containing oxidoreductase; part of the gene cluster that mediates the biosynthesis of the indole diterpenes penitrems. The geranylgeranyl diphosphate (GGPP) synthase ptmG catalyzes the first step in penitrem biosynthesis via conversion of farnesyl pyrophosphate and isopentyl pyrophosphate into geranylgeranyl pyrophosphate (GGPP). Condensation of indole-3-glycerol phosphate with GGPP by the prenyl transferase ptmC then forms 3-geranylgeranylindole (3-GGI). Epoxidation by the FAD-dependent monooxygenase ptmM leads to a epoxidized-GGI that is substrate of the terpene cyclase ptmB for cyclization to yield paspaline. Paspaline is subsequently converted to 13-desoxypaxilline by the cytochrome P450 monooxygenase ptmP, the latter being then converted to paxilline by the cytochrome P450 monooxygenase ptmQ. Paxilline is converted to beta-paxitriol via C-10 ketoreduction by the short-chain dehydrogenase ptmH which can be monoprenylated at the C-20 by the indole diterpene prenyltransferase ptmD. A two-step elimination (acetylation and elimination) process performed by the O-acetyltransferase ptmV and ptmI leads to the production of the prenylated form of penijanthine. The FAD-linked oxidoreductase ptmO then converts the prenylated form of penijanthine into PC-M5 which is in turn transformed into PC-M4 by the aromatic dimethylallyltransferase ptmE. Five sequential oxidative transformations performed by the cytochrome P450 monooxygenases ptmK, ptmU, ptmL, ptmN and ptmJ yield the various penitrem compounds. PtmK, ptmU and ptmM are involved in the formation of the key bicyclic ring of penitrem C via the formation of the intermediates secopenitrem D and penitrem D. PtmL catalyzes the epoxidation of penitrem D and C to yield penitrem B and F, respectively. PtmJ catalyzes the last benzylic hydroxylation to convert penitrem B to prenitrem E and penitrem F to penitrem A. The sequence is that of NmrA-like family domain-containing oxidoreductase ptmS from Penicillium ochrochloron.